Reading from the N-terminus, the 334-residue chain is Glycerol-1-phosphate dehydrogenase [NAD(P)+] (334 aa).

NAD(+)-binding positions include 77-81 (GRPID) and 99-102 (TTAS). Aspartate 104 lines the substrate pocket. Serine 108 provides a ligand contact to NAD(+). Residue aspartate 147 participates in substrate binding. Aspartate 147 and histidine 225 together coordinate Zn(2+). Histidine 229 is a binding site for substrate. Histidine 246 contacts Zn(2+).

The protein belongs to the glycerol-1-phosphate dehydrogenase family. Requires Zn(2+) as cofactor.

Its subcellular location is the cytoplasm. The catalysed reaction is sn-glycerol 1-phosphate + NAD(+) = dihydroxyacetone phosphate + NADH + H(+). It catalyses the reaction sn-glycerol 1-phosphate + NADP(+) = dihydroxyacetone phosphate + NADPH + H(+). The protein operates within membrane lipid metabolism; glycerophospholipid metabolism. Functionally, catalyzes the NAD(P)H-dependent reduction of dihydroxyacetonephosphate (DHAP or glycerone phosphate) to glycerol 1-phosphate (G1P). The G1P thus generated is used as the glycerophosphate backbone of phospholipids in the cellular membranes of Archaea. This chain is Glycerol-1-phosphate dehydrogenase [NAD(P)+], found in Methanococcus maripaludis (strain DSM 14266 / JCM 13030 / NBRC 101832 / S2 / LL).